An 883-amino-acid polypeptide reads, in one-letter code: Phosphoenolpyruvate carboxylase (883 aa).

Catalysis depends on residues His-138 and Lys-546.

This sequence belongs to the PEPCase type 1 family. The cofactor is Mg(2+).

It catalyses the reaction oxaloacetate + phosphate = phosphoenolpyruvate + hydrogencarbonate. In terms of biological role, forms oxaloacetate, a four-carbon dicarboxylic acid source for the tricarboxylic acid cycle. The sequence is that of Phosphoenolpyruvate carboxylase from Escherichia coli O81 (strain ED1a).